The chain runs to 1579 residues: Pentafunctional AROM polypeptide (1579 aa).

The segment at methionine 1 to aspartate 383 is 3-dehydroquinate synthase. NAD(+) is bound by residues aspartate 40–asparagine 42, glutamate 75–lysine 78, glycine 106–isoleucine 108, and aspartate 111. Arginine 122 serves as a coordination point for 7-phospho-2-dehydro-3-deoxy-D-arabino-heptonate. Threonine 131 to serine 132 is an NAD(+) binding site. 7-phospho-2-dehydro-3-deoxy-D-arabino-heptonate contacts are provided by aspartate 138 and lysine 144. NAD(+) is bound at residue lysine 153. Asparagine 154 contributes to the 7-phospho-2-dehydro-3-deoxy-D-arabino-heptonate binding site. Residues tryptophan 171–serine 174 and asparagine 182 each bind NAD(+). Glutamate 186 is a binding site for Zn(2+). Residues glutamate 186–lysine 189 and lysine 249 contribute to the 7-phospho-2-dehydro-3-deoxy-D-arabino-heptonate site. Glutamate 259 (proton acceptor; for 3-dehydroquinate synthase activity) is an active-site residue. 7-phospho-2-dehydro-3-deoxy-D-arabino-heptonate contacts are provided by residues arginine 263–asparagine 267 and histidine 270. Histidine 270 contributes to the Zn(2+) binding site. The active-site Proton acceptor; for 3-dehydroquinate synthase activity is the histidine 274. Histidine 286 and lysine 355 together coordinate 7-phospho-2-dehydro-3-deoxy-D-arabino-heptonate. Histidine 286 contacts Zn(2+). The tract at residues valine 396 to alanine 862 is EPSP synthase. Cysteine 844 serves as the catalytic For EPSP synthase activity. The interval serine 881–cysteine 1071 is shikimate kinase. Glycine 886–threonine 893 serves as a coordination point for ATP. Residues leucine 1072–glutamate 1284 are 3-dehydroquinase. The active-site Proton acceptor; for 3-dehydroquinate dehydratase activity is histidine 1189. Residue lysine 1218 is the Schiff-base intermediate with substrate; for 3-dehydroquinate dehydratase activity of the active site. A shikimate dehydrogenase region spans residues lysine 1297 to isoleucine 1579.

The protein in the N-terminal section; belongs to the sugar phosphate cyclases superfamily. Dehydroquinate synthase family. In the 2nd section; belongs to the EPSP synthase family. It in the 3rd section; belongs to the shikimate kinase family. This sequence in the 4th section; belongs to the type-I 3-dehydroquinase family. The protein in the C-terminal section; belongs to the shikimate dehydrogenase family. As to quaternary structure, homodimer. It depends on Zn(2+) as a cofactor.

The protein localises to the cytoplasm. It carries out the reaction 7-phospho-2-dehydro-3-deoxy-D-arabino-heptonate = 3-dehydroquinate + phosphate. It catalyses the reaction 3-dehydroquinate = 3-dehydroshikimate + H2O. The enzyme catalyses shikimate + NADP(+) = 3-dehydroshikimate + NADPH + H(+). The catalysed reaction is shikimate + ATP = 3-phosphoshikimate + ADP + H(+). It carries out the reaction 3-phosphoshikimate + phosphoenolpyruvate = 5-O-(1-carboxyvinyl)-3-phosphoshikimate + phosphate. Its pathway is metabolic intermediate biosynthesis; chorismate biosynthesis; chorismate from D-erythrose 4-phosphate and phosphoenolpyruvate: step 2/7. The protein operates within metabolic intermediate biosynthesis; chorismate biosynthesis; chorismate from D-erythrose 4-phosphate and phosphoenolpyruvate: step 3/7. It functions in the pathway metabolic intermediate biosynthesis; chorismate biosynthesis; chorismate from D-erythrose 4-phosphate and phosphoenolpyruvate: step 4/7. It participates in metabolic intermediate biosynthesis; chorismate biosynthesis; chorismate from D-erythrose 4-phosphate and phosphoenolpyruvate: step 5/7. Its pathway is metabolic intermediate biosynthesis; chorismate biosynthesis; chorismate from D-erythrose 4-phosphate and phosphoenolpyruvate: step 6/7. The AROM polypeptide catalyzes 5 consecutive enzymatic reactions in prechorismate polyaromatic amino acid biosynthesis. This Candida glabrata (strain ATCC 2001 / BCRC 20586 / JCM 3761 / NBRC 0622 / NRRL Y-65 / CBS 138) (Yeast) protein is Pentafunctional AROM polypeptide.